Consider the following 274-residue polypeptide: NH(3)-dependent NAD(+) synthetase (274 aa).

46–53 (GISGGQDS) is an ATP binding site. Residue Asp52 participates in Mg(2+) binding. Arg140 provides a ligand contact to deamido-NAD(+). Thr160 provides a ligand contact to ATP. Glu165 contacts Mg(2+). Deamido-NAD(+) is bound by residues Lys173 and Asp180. 2 residues coordinate ATP: Lys189 and Thr211. 260 to 261 (HK) is a deamido-NAD(+) binding site.

This sequence belongs to the NAD synthetase family. In terms of assembly, homodimer.

The catalysed reaction is deamido-NAD(+) + NH4(+) + ATP = AMP + diphosphate + NAD(+) + H(+). It functions in the pathway cofactor biosynthesis; NAD(+) biosynthesis; NAD(+) from deamido-NAD(+) (ammonia route): step 1/1. Catalyzes the ATP-dependent amidation of deamido-NAD to form NAD. Uses ammonia as a nitrogen source. The sequence is that of NH(3)-dependent NAD(+) synthetase from Streptococcus suis (strain 05ZYH33).